The chain runs to 312 residues: tRNA uridine(34) hydroxylase (312 aa).

Residues 123–217 enclose the Rhodanese domain; the sequence is SDPEVLLIDT…YLEEVPQEQS (95 aa). C177 acts as the Cysteine persulfide intermediate in catalysis. The span at 282 to 293 shows a compositional bias: basic and acidic residues; that stretch reads ARERQKQIELAR. Positions 282-312 are disordered; sequence ARERQKQIELARQRNQPHPLGRDPRQSTLEN.

Belongs to the TrhO family.

The catalysed reaction is uridine(34) in tRNA + AH2 + O2 = 5-hydroxyuridine(34) in tRNA + A + H2O. Functionally, catalyzes oxygen-dependent 5-hydroxyuridine (ho5U) modification at position 34 in tRNAs. This chain is tRNA uridine(34) hydroxylase, found in Pseudomonas paraeruginosa (strain DSM 24068 / PA7) (Pseudomonas aeruginosa (strain PA7)).